The chain runs to 46 residues: Large ribosomal subunit protein bL36 (46 aa).

This sequence belongs to the bacterial ribosomal protein bL36 family.

The protein is Large ribosomal subunit protein bL36 of Klebsiella pneumoniae (strain 342).